We begin with the raw amino-acid sequence, 792 residues long: Phenylalanine--tRNA ligase beta subunit (792 aa).

The tRNA-binding domain occupies 40 to 156 (FPRTENLIVG…AKLNDIDPLK (117 aa)). A B5 domain is found at 404 to 472 (LKDNLIDFDS…KKINVNNLEL (69 aa)). Mg(2+) contacts are provided by D450, D456, E459, and E460.

This sequence belongs to the phenylalanyl-tRNA synthetase beta subunit family. Type 1 subfamily. Tetramer of two alpha and two beta subunits. Mg(2+) is required as a cofactor.

It is found in the cytoplasm. The catalysed reaction is tRNA(Phe) + L-phenylalanine + ATP = L-phenylalanyl-tRNA(Phe) + AMP + diphosphate + H(+). This Malacoplasma penetrans (strain HF-2) (Mycoplasma penetrans) protein is Phenylalanine--tRNA ligase beta subunit.